The sequence spans 256 residues: UstYa family oxidase phomYc (256 aa).

The chain crosses the membrane as a helical span at residues 38–58 (LVLVLQFVLIISLLASLHILG). N-linked (GlcNAc...) asparagine glycosylation is found at asparagine 64 and asparagine 132. The HXXHC 1 signature appears at 158-162 (HQLHC). Asparagine 179 carries N-linked (GlcNAc...) asparagine glycosylation. The HXXHC 2 motif lies at 193–197 (HIDHC).

Belongs to the ustYa family.

The protein resides in the membrane. Its pathway is mycotoxin biosynthesis. Functionally, ustYa family oxidase; part of the gene cluster that mediates the biosynthesis of the phomopsins, a group of hexapeptide mycotoxins which infects lupins and causes lupinosis disease in livestock. Within the pathway, phomYc catalyzes the desaturation of the Ile moiety into 2,3-dehydroisoleucine (dIle). The pathway starts with the processing of the precursor phomA by several endopeptidases including kexin proteases as well as the cluster-specific S41 family peptidase phomP1 and the oligopeptidase phomG to produce 10 identical copies of the hexapeptide Tyr-Val-Ile-Pro-Ile-Asp. After being excised from the precursor peptide, the core peptides are cyclized and modified post-translationally by enzymes encoded within the gene cluster. The timing and order of proteolysis of the phomA precursor and PTMs are still unknown. Two tyrosinase-like enzymes, phomQ1 and phomQ2, catalyze the chlorination and hydroxylation of Tyr, respectively. PhomYb, is proposed to be involved in the construction of the macrocyclic structure. The other 4 ustYa family proteins may be involved in PTMs that generate the unique structure of phomopsin A. PhomYa is required for the hydroxylation of C-beta of Tyr. PhomYc, phomYd, and phomYe are responsible for the biosynthesis of 2,3-dehydroisoleucine (dIle), 2,3-dehydroaspartic acid (dAsp), and 3,4-dehydroproline (dPro), respectively. While dIle formation by phomYc is indispensable for the installation of dAsp by phomYd, the order of the other PTMs have not been elucidated yet. Most of the biosynthetic enzymes likely have broad substrate specificity, and thus, there might be a metabolic grid from a precursor to phomopsin A. The enzyme(s) responsible for the biosynthesis of 3,4-dehydrovaline (dVal) have also not been identified yet. Finally, phomM acts as an S-adenosylmethionine-dependent alpha-N-methyltransferase that catalyzes two successive N-methylation reactions, converting N-desmethyl-phomopsin A to phomopsin A and phomopsin A further to an N,N-dimethylated congener called phomopsin E. The protein is UstYa family oxidase phomYc of Diaporthe leptostromiformis (Lupinosis disease fungus).